Consider the following 161-residue polypeptide: UPF0178 protein BR1979/BS1330_I1973 (161 aa).

This sequence belongs to the UPF0178 family.

In Brucella suis biovar 1 (strain 1330), this protein is UPF0178 protein BR1979/BS1330_I1973.